The following is a 108-amino-acid chain: MSQQKQKQCAPPQQCCPPPQQRCPPPQQCCPPPQQCCPPPQQCCPPPQQCCPPPQQCCPPPQQCCPPPQQYCPPPQQTKQPCQPPPKCQEPCAPKCPPPQQCQTSKQK.

Residues 1–13 are compositionally biased toward low complexity; it reads MSQQKQKQCAPPQ. Disordered regions lie at residues 1 to 24 and 73 to 108; these read MSQQ…QRCP and PPPQ…SKQK. 2 stretches are compositionally biased toward pro residues: residues 14 to 24 and 73 to 100; these read QCCPPPQQRCP and PPPQ…PPPQ.

Its function is as follows. Positively regulates keratinocyte differentiation by inducing genes associated with epidermal differentiation. The chain is Small proline-rich protein 5 from Homo sapiens (Human).